A 34-amino-acid chain; its full sequence is VSCTGSKDCYAPCRKQTGCPNAKCINKSCKCYGC.

Cystine bridges form between Cys3/Cys24, Cys9/Cys29, Cys13/Cys19, and Cys31/Cys34. Cys34 is modified (cysteine amide).

It belongs to the short scorpion toxin superfamily. Potassium channel inhibitor family. Alpha-KTx 06 subfamily. As to expression, expressed by the venom gland.

The protein resides in the secreted. Blocks voltage-gated potassium channels Kv1.2/KCNA2 (IC(50)=0.12-0.8 nM), KCa3.1/KCNN4 (IC(50)=1-2.2 nM), Shaker B (IC(50)=2.39-80 nM), Kv1.1/KCNA1 (IC(50)=37-45 or no activity, depending on the study), Kv1.3/KCNA3 (IC(50)=150-180 or no activity, depending on the study). This is Potassium channel toxin alpha-KTx 6.2 from Scorpio palmatus (Israeli golden scorpion).